We begin with the raw amino-acid sequence, 3131 residues long: Enniatin synthase (3131 aa).

The tract at residues 53–466 (ADDKQRAVGH…VEKVDMMTQE (414 aa)) is condensation 1. The tract at residues 186–212 (NDEHPRQFETPDSSQATPEEDLQPNPS) is disordered. The segment at 495 to 887 (SQSPNKAAVA…GRMDSQVKIR (393 aa)) is adenylation 1. The 77-residue stretch at 1010–1086 (SSGTDTYTKL…GLKAIVIGTS (77 aa)) folds into the Carrier 1 domain. O-(pantetheine 4'-phosphoryl)serine is present on Ser1047. The segment at 1105–1534 (SYAQNRMWFL…ETCISVLPLT (430 aa)) is condensation 2. The segment at 1563-1960 (FREQAAANPE…GRMDNQFKIR (398 aa)) is adenylation 2. Residues 2021-2177 (EGWQDHFESG…YLAEVIDGLI (157 aa)) form an S-adenosyl-L-methionine-dependent N-methyltransferase region. Carrier domains lie at 2504-2578 (FPIS…RQGL) and 2598-2671 (APRT…ESSH). O-(pantetheine 4'-phosphoryl)serine is present on residues Ser2538 and Ser2632. The segment at 2718 to 3123 (QDVYPSTQMQ…RHVLEEVCKT (406 aa)) is condensation 3.

Belongs to the ATP-dependent AMP-binding enzyme family. Requires pantetheine 4'-phosphate as cofactor. The N-terminus is blocked.

The protein operates within antibiotic biosynthesis; enniatin biosynthesis. With respect to regulation, the N-methylation activity is inhibited by S-adenosyl-L-homocysteine and sinefugin. Functionally, nonribosomal peptide synthetase that synthesizes enniatin by coupling three D-hydroxycarboxylic acids and three L-amino acids via amide and ester bonds in an alternating fashion. Whereas ESYN1 can accept different amino acids as precursors (L -valine, L-isoleucine or L-leucine), only one species of D-hydroxycarboxylic acid can be found in natural enniatin isolates (D-hydroxyisovaleric acid, D-Hiv). D-Hiv stems from L-valine deanimation by a valine aminotransferase to 2-keto-isovaleric acid (2-Kiv), which becomes subsequently reduced by a keto-isovaleric acid reductase (KivR) to D-Hiv. Peptide bond formation and N-methylation of the amino acid occur before three enzyme-bound dipeptidols are condensed to a hexapeptidol. The polypeptide is Enniatin synthase (Fusarium equiseti (Fusarium scirpi)).